Reading from the N-terminus, the 562-residue chain is Putative transport protein YE1478 (562 aa).

6 helical membrane passes run 8–28 (LLNG…LCLG), 32–52 (LGPI…LLGQ), 66–86 (FMLF…SIFF), 94–114 (MLAL…GKLF), 118–138 (IGLT…LVGA), and 158–178 (NLSL…ILGA). RCK C-terminal domains follow at residues 202-288 (LDTD…SFRN) and 290-373 (KEVF…KIGF). 5 helical membrane passes run 383-403 (LLAF…TFQF), 406-426 (FSFG…LGFL), 447-467 (FGLM…INSS), 475-495 (MLIS…IFGA), and 541-561 (IANV…PGIL).

This sequence belongs to the AAE transporter (TC 2.A.81) family. YbjL subfamily.

The protein localises to the cell membrane. The sequence is that of Putative transport protein YE1478 from Yersinia enterocolitica serotype O:8 / biotype 1B (strain NCTC 13174 / 8081).